A 382-amino-acid chain; its full sequence is MGIKGLTKLLADNAPKSMKENKFESYFGRKIAIDASMSIYQFLIVVGRSGTEMLTNEAGEVTSHLQGMFSRTIRLLEAGIKPVYVFDGKPPDLKKQELAKRYSKRAEATEDLSEALETANKEDIEKFSKRTVKVTKQHNDDCKRLLRLMGVPVVEAPSEAEAQCAALCKAGKVYGVVSEDMDSLTFGAPKFLRHLMDPSSKKIPVMEFEVAKILEELNMTMDQFIDLCILSGCDYCDSIRGIGGLTALKLIRQHGSIENIPENLNKERYQIPDNWPYQEARRLFKEPLVITDEKELDIKWSSPDEEGLITFLVNENGFNRDRVTKAIEKIKVAKNKSSQGRLESFFKPTANPSVPIKRKETPVNNAKETNKKTKAGGGKKKK.

The segment at 1-105 is N-domain; it reads MGIKGLTKLL…QELAKRYSKR (105 aa). Aspartate 34 contributes to the Mg(2+) binding site. Arginine 71 contacts DNA. Aspartate 87, glutamate 159, glutamate 161, aspartate 180, and aspartate 182 together coordinate Mg(2+). The segment at 123–254 is I-domain; it reads DIEKFSKRTV…LTALKLIRQH (132 aa). Residue glutamate 159 participates in DNA binding. Positions 232 and 234 each coordinate DNA. Aspartate 234 serves as a coordination point for Mg(2+). Residues 338-346 are interaction with PCNA; that stretch reads SQGRLESFF. Residues 339–382 form a disordered region; that stretch reads QGRLESFFKPTANPSVPIKRKETPVNNAKETNKKTKAGGGKKKK. A compositionally biased stretch (basic residues) spans 372-382; the sequence is KTKAGGGKKKK.

Belongs to the XPG/RAD2 endonuclease family. FEN1 subfamily. Interacts with PCNA. Three molecules of FEN1 bind to one PCNA trimer with each molecule binding to one PCNA monomer. PCNA stimulates the nuclease activity without altering cleavage specificity. Requires Mg(2+) as cofactor. Post-translationally, phosphorylated. Phosphorylation upon DNA damage induces relocalization to the nuclear plasma.

Its subcellular location is the nucleus. The protein resides in the nucleolus. The protein localises to the nucleoplasm. It localises to the mitochondrion. Structure-specific nuclease with 5'-flap endonuclease and 5'-3' exonuclease activities involved in DNA replication and repair. During DNA replication, cleaves the 5'-overhanging flap structure that is generated by displacement synthesis when DNA polymerase encounters the 5'-end of a downstream Okazaki fragment. It enters the flap from the 5'-end and then tracks to cleave the flap base, leaving a nick for ligation. Also involved in the long patch base excision repair (LP-BER) pathway, by cleaving within the apurinic/apyrimidinic (AP) site-terminated flap. Acts as a genome stabilization factor that prevents flaps from equilibrating into structures that lead to duplications and deletions. Also possesses 5'-3' exonuclease activity on nicked or gapped double-stranded DNA, and exhibits RNase H activity. Also involved in replication and repair of rDNA and in repairing mitochondrial DNA. In Glycine max (Soybean), this protein is Flap endonuclease 1.